The sequence spans 149 residues: L-alanine exporter AlaE (149 aa).

4 helical membrane-spanning segments follow: residues 17-37 (FAMV…ISGM), 43-63 (LASR…YGVF), 86-106 (LTAY…TVGA), and 111-131 (IITA…FYGY).

The protein belongs to the AlaE exporter family.

Its subcellular location is the cell inner membrane. In terms of biological role, exports L-alanine. This Aliivibrio salmonicida (strain LFI1238) (Vibrio salmonicida (strain LFI1238)) protein is L-alanine exporter AlaE.